A 923-amino-acid polypeptide reads, in one-letter code: Protocadherin gamma-B4 (923 aa).

The N-terminal stretch at 1–30 is a signal peptide; it reads MGSGAGELGRAERLPVLFLFLLSLFCPALC. Cadherin domains follow at residues 31–133, 134–242, 243–345, 346–450, 451–560, and 568–673; these read EQIR…TPKF, TQNS…APVF, SQDI…APEV, IFQS…APVF, SQSS…APRV, and DGSA…LPDI. The Extracellular portion of the chain corresponds to 31–689; that stretch reads EQIRYRIPEE…SDLEAELQFY (659 aa). Asn417 and Asn543 each carry an N-linked (GlcNAc...) asparagine glycan. The chain crosses the membrane as a helical span at residues 690-710; it reads LVVALALISVLFLVAMILAIA. Residues 711–923 are Cytoplasmic-facing; sequence LRLRRSSSPA…KKKSGKKEKK (213 aa). Disordered regions lie at residues 797-832 and 893-923; these read SHQQ…WPNN and ATLT…KEKK. Residues 913-923 show a composition bias toward basic residues; it reads NKKKSGKKEKK.

It localises to the cell membrane. Functionally, potential calcium-dependent cell-adhesion protein. May be involved in the establishment and maintenance of specific neuronal connections in the brain. The chain is Protocadherin gamma-B4 (PCDHGB4) from Pan troglodytes (Chimpanzee).